A 529-amino-acid polypeptide reads, in one-letter code: MQQRRPIRRALLSVSDKAGIIEFATALSQRGIELLSTGGTARLLADAGLPVTEVSDYTGFPEMMDGRVKTLHPKVHGGILGRRGQDDGIMAQHDIQPIDIVVVNLYPFAQTVARPDCSLEDAVENIDIGGPTMVRSAAKNHKDVAIVVKSSDYPAIIAELDENDGSLTYPTRFNLAIKAFEHTAAYDSMIANYFGALVPAYHGDTEQPSGRFPRTLNLNYIKKQDMRYGENSHQQAAFYIEEDVKEASVATALQLQGKALSYNNIADTDAALECVKEFSEPACVIVKHANPCGVAIADSLLAAYDKAYKTDPTSAFGGIIAFNRELDAETASAIISRQFVEVIIAPSVSTEALALLAAKQNVRVLTCGQWQERSAGLDFKRVNGGLLVQDRDLGMVTEADLRVVSQRQPTEQELRDALFCWKVAKFVKSNAIVYARDNMTIGIGAGQMSRVYSAKIAGIKAADEGLEVAGSAMASDAFFPFRDGIDAAAAVGITCVIQPGGSIRDDEVIAAADEHGIAMIFTDMRHFRH.

The MGS-like domain maps to 1–148; the sequence is MQQRRPIRRA…KNHKDVAIVV (148 aa).

It belongs to the PurH family.

It carries out the reaction (6R)-10-formyltetrahydrofolate + 5-amino-1-(5-phospho-beta-D-ribosyl)imidazole-4-carboxamide = 5-formamido-1-(5-phospho-D-ribosyl)imidazole-4-carboxamide + (6S)-5,6,7,8-tetrahydrofolate. It catalyses the reaction IMP + H2O = 5-formamido-1-(5-phospho-D-ribosyl)imidazole-4-carboxamide. The protein operates within purine metabolism; IMP biosynthesis via de novo pathway; 5-formamido-1-(5-phospho-D-ribosyl)imidazole-4-carboxamide from 5-amino-1-(5-phospho-D-ribosyl)imidazole-4-carboxamide (10-formyl THF route): step 1/1. Its pathway is purine metabolism; IMP biosynthesis via de novo pathway; IMP from 5-formamido-1-(5-phospho-D-ribosyl)imidazole-4-carboxamide: step 1/1. The polypeptide is Bifunctional purine biosynthesis protein PurH (Yersinia enterocolitica serotype O:8 / biotype 1B (strain NCTC 13174 / 8081)).